The following is a 679-amino-acid chain: Glutamine-dependent NAD(+) synthetase (679 aa).

Positions 12–276 (VRVAACTHHT…VRRSVADVDT (265 aa)) constitute a CN hydrolase domain. Glu-52 (proton acceptor; for glutaminase activity) is an active-site residue. Lys-121 serves as the catalytic For glutaminase activity. Tyr-127 is a binding site for L-glutamine. The active-site Nucleophile; for glutaminase activity is Cys-176. L-glutamine-binding residues include Ser-203 and Arg-209. The interval 337 to 679 (QQDCYEAYNI…DQIDREVPKG (343 aa)) is ligase. 366-373 (GVSGGLDS) is an ATP binding site. Residue Asn-456 participates in deamido-NAD(+) binding. An ATP-binding site is contributed by Thr-480. Deamido-NAD(+) contacts are provided by residues Glu-485, 490–493 (WSTY), and Lys-635. The tract at residues 639 to 658 (LPNGPKVSHGGALSPRGDWR) is disordered.

It in the C-terminal section; belongs to the NAD synthetase family.

The enzyme catalyses deamido-NAD(+) + L-glutamine + ATP + H2O = L-glutamate + AMP + diphosphate + NAD(+) + H(+). It participates in cofactor biosynthesis; NAD(+) biosynthesis; NAD(+) from deamido-NAD(+) (L-Gln route): step 1/1. In terms of biological role, catalyzes the ATP-dependent amidation of deamido-NAD to form NAD. Uses L-glutamine as a nitrogen source. In Mycobacterium bovis (strain ATCC BAA-935 / AF2122/97), this protein is Glutamine-dependent NAD(+) synthetase.